The sequence spans 158 residues: MQGTLSVWLAKRGLVHRSLGFDYQGIETLQIKPEDWHSIAVILYVYGYNYLRSQCAYDVAPGGLLASVYHLTRIEYGVHQAEEVCIKVFTHRSNPRIPSVFWVWKSTDFQERESYDMLGITYDSHPRLKRILMPESWIGWPLRKDYIAPNFYEIQDAY.

It belongs to the complex I 30 kDa subunit family. NDH is composed of at least 16 different subunits, 5 of which are encoded in the nucleus.

Its subcellular location is the plastid. The protein localises to the chloroplast thylakoid membrane. The catalysed reaction is a plastoquinone + NADH + (n+1) H(+)(in) = a plastoquinol + NAD(+) + n H(+)(out). It catalyses the reaction a plastoquinone + NADPH + (n+1) H(+)(in) = a plastoquinol + NADP(+) + n H(+)(out). In terms of biological role, NDH shuttles electrons from NAD(P)H:plastoquinone, via FMN and iron-sulfur (Fe-S) centers, to quinones in the photosynthetic chain and possibly in a chloroplast respiratory chain. The immediate electron acceptor for the enzyme in this species is believed to be plastoquinone. Couples the redox reaction to proton translocation, and thus conserves the redox energy in a proton gradient. In Olimarabidopsis pumila (Dwarf rocket), this protein is NAD(P)H-quinone oxidoreductase subunit J, chloroplastic.